The following is a 63-amino-acid chain: Conotoxin Lt11.1 (63 aa).

The N-terminal stretch at 1–23 is a signal peptide; that stretch reads MMFRLTSVLLVIVLLNLVVLTNA. Cystine bridges form between cysteine 24–cysteine 34, cysteine 28–cysteine 39, cysteine 33–cysteine 42, and cysteine 38–cysteine 47. Positions 53-63 are excised as a propeptide; that stretch reads ALLQRLLGHQR.

This sequence belongs to the conotoxin I2 superfamily. In terms of tissue distribution, expressed by the venom duct.

It localises to the secreted. This Conus litteratus (Lettered cone) protein is Conotoxin Lt11.1.